The chain runs to 146 residues: D-aminoacyl-tRNA deacylase (146 aa).

The Gly-cisPro motif, important for rejection of L-amino acids signature appears at 137-138; that stretch reads GP.

This sequence belongs to the DTD family. In terms of assembly, homodimer.

It localises to the cytoplasm. It catalyses the reaction glycyl-tRNA(Ala) + H2O = tRNA(Ala) + glycine + H(+). It carries out the reaction a D-aminoacyl-tRNA + H2O = a tRNA + a D-alpha-amino acid + H(+). An aminoacyl-tRNA editing enzyme that deacylates mischarged D-aminoacyl-tRNAs. Also deacylates mischarged glycyl-tRNA(Ala), protecting cells against glycine mischarging by AlaRS. Acts via tRNA-based rather than protein-based catalysis; rejects L-amino acids rather than detecting D-amino acids in the active site. By recycling D-aminoacyl-tRNA to D-amino acids and free tRNA molecules, this enzyme counteracts the toxicity associated with the formation of D-aminoacyl-tRNA entities in vivo and helps enforce protein L-homochirality. This Cellvibrio japonicus (strain Ueda107) (Pseudomonas fluorescens subsp. cellulosa) protein is D-aminoacyl-tRNA deacylase.